A 324-amino-acid chain; its full sequence is MDPVQSHGSQSSLPPPFHARDFQLHLQQQQQEFFLHHHQQQRNQTDGDQQGGSGGNRQIKMDREETSDNIDNIANNSGSEGKDIDIHGGSGEGGGGSGGDHQMTRRPRGRPAGSKNKPKPPIIITRDSANALRTHVMEIGDGCDLVESVATFARRRQRGVCVMSGTGNVTNVTIRQPGSHPSPGSVVSLHGRFEILSLSGSFLPPPAPPTATGLSVYLAGGQGQVVGGSVVGPLLCAGPVVVMAASFSNAAYERLPLEEDEMQTPVHGGGGGGSLESPPMMGQQLQHQQQAMSGHQGLPPNLLGSVQLQQQHDQSYWSTGRPPY.

Residues 1–12 show a composition bias toward polar residues; it reads MDPVQSHGSQSS. 2 disordered regions span residues 1–122 and 262–324; these read MDPV…KPPI and MQTP…RPPY. Positions 24–33 are enriched in low complexity; that stretch reads LHLQQQQQEF. Over residues 69-79 the composition is skewed to polar residues; it reads NIDNIANNSGS. Gly residues predominate over residues 88 to 99; it reads GGSGEGGGGSGG. A DNA-binding region (a.T hook) is located at residues 105-117; the sequence is RRPRGRPAGSKNK. In terms of domain architecture, PPC spans 129-268; the sequence is ANALRTHVME…EDEMQTPVHG (140 aa). Positions 280 to 297 are enriched in low complexity; sequence MMGQQLQHQQQAMSGHQG. Positions 304-318 are enriched in polar residues; it reads GSVQLQQQHDQSYWS.

The protein localises to the nucleus. Transcription factor that specifically binds AT-rich DNA sequences related to the nuclear matrix attachment regions (MARs). The sequence is that of AT-hook motif nuclear-localized protein 24 from Arabidopsis thaliana (Mouse-ear cress).